Here is a 134-residue protein sequence, read N- to C-terminus: Rubredoxin-2 (134 aa).

The Rubredoxin-like domain maps to Met-1–Leu-53. Fe cation is bound by residues Cys-6, Cys-9, Cys-39, and Cys-42. Positions Ser-99–Ser-116 are enriched in basic and acidic residues. The segment at Ser-99–Arg-134 is disordered. The segment covering Ser-124 to Arg-134 has biased composition (basic residues).

It belongs to the rubredoxin family. It depends on Fe(3+) as a cofactor.

The protein localises to the cytoplasm. The protein operates within hydrocarbon metabolism; alkane degradation. Its function is as follows. Involved in the hydrocarbon hydroxylating system, which transfers electrons from NADH to rubredoxin reductase and then through rubredoxin to alkane 1 monooxygenase. This is Rubredoxin-2 (alkF) from Pseudomonas putida (Arthrobacter siderocapsulatus).